The following is an 856-amino-acid chain: Paladin (856 aa).

Low complexity predominate over residues 1 to 16; sequence MGTTASTAQQTVSAGT. Residues 1 to 29 are disordered; sequence MGTTASTAQQTVSAGTPFEGLQGSGTMDS. G2 carries N-myristoyl glycine lipidation. S86 carries the post-translational modification Phosphoserine.

This sequence belongs to the paladin family. As to expression, expressed in endothelial cells, and in certain larger vessels, in mural cells. In the brain, possibly expressed in microglia. Expressed in peripheral blood mononuclear cells (at protein level).

It localises to the cytoplasm. The protein resides in the cytosol. This is Paladin (PALD1) from Homo sapiens (Human).